The chain runs to 398 residues: Phosphoglycerate kinase (398 aa).

Residues 21-23, Arg-36, 59-62, Arg-119, and Arg-157 contribute to the substrate site; these read DFN and HLGR. ATP-binding positions include Lys-208, Gly-296, Glu-327, and 354–357; that span reads GGDS.

Belongs to the phosphoglycerate kinase family. Monomer.

It localises to the cytoplasm. The enzyme catalyses (2R)-3-phosphoglycerate + ATP = (2R)-3-phospho-glyceroyl phosphate + ADP. The protein operates within carbohydrate degradation; glycolysis; pyruvate from D-glyceraldehyde 3-phosphate: step 2/5. The polypeptide is Phosphoglycerate kinase (Lactococcus lactis subsp. cremoris (strain MG1363)).